Here is a 197-residue protein sequence, read N- to C-terminus: RNA pyrophosphohydrolase (197 aa).

The 144-residue stretch at 6-149 (GYRPNVGIVI…KRDVYRKAMK (144 aa)) folds into the Nudix hydrolase domain. A Nudix box motif is present at residues 38-59 (GGINDGETPEQAMYRELYEEVG). The tract at residues 165–197 (LSTNNNDEKKANYSAKKPYSPYRNQDKKRKTRV) is disordered.

Belongs to the Nudix hydrolase family. RppH subfamily. A divalent metal cation serves as cofactor.

In terms of biological role, accelerates the degradation of transcripts by removing pyrophosphate from the 5'-end of triphosphorylated RNA, leading to a more labile monophosphorylated state that can stimulate subsequent ribonuclease cleavage. This Mannheimia succiniciproducens (strain KCTC 0769BP / MBEL55E) protein is RNA pyrophosphohydrolase.